The primary structure comprises 397 residues: Arginine biosynthesis bifunctional protein ArgJ (397 aa).

6 residues coordinate substrate: Thr147, Lys173, Thr184, Glu270, Asn392, and Thr397. Thr184 (nucleophile) is an active-site residue.

The protein belongs to the ArgJ family. Heterotetramer of two alpha and two beta chains.

It localises to the cytoplasm. It catalyses the reaction N(2)-acetyl-L-ornithine + L-glutamate = N-acetyl-L-glutamate + L-ornithine. The enzyme catalyses L-glutamate + acetyl-CoA = N-acetyl-L-glutamate + CoA + H(+). Its pathway is amino-acid biosynthesis; L-arginine biosynthesis; L-ornithine and N-acetyl-L-glutamate from L-glutamate and N(2)-acetyl-L-ornithine (cyclic): step 1/1. It participates in amino-acid biosynthesis; L-arginine biosynthesis; N(2)-acetyl-L-ornithine from L-glutamate: step 1/4. Its function is as follows. Catalyzes two activities which are involved in the cyclic version of arginine biosynthesis: the synthesis of N-acetylglutamate from glutamate and acetyl-CoA as the acetyl donor, and of ornithine by transacetylation between N(2)-acetylornithine and glutamate. The polypeptide is Arginine biosynthesis bifunctional protein ArgJ (Streptococcus mutans serotype c (strain ATCC 700610 / UA159)).